We begin with the raw amino-acid sequence, 453 residues long: Homeobox protein meis3 (453 aa).

The segment at 33–64 (HHSLSQSAPYGSTGAAHRVPMPPGMGSNDGLK) is disordered. One can recognise an MEIS N-terminal domain in the interval 102 to 185 (GGDVCSSDSF…PIDLVIDDRD (84 aa)). The tract at residues 192-272 (LEDFTGSCTS…RDKKRNKKRG (81 aa)) is disordered. Positions 197 to 209 (GSCTSLSDQNNSW) are enriched in polar residues. Residues 218-230 (STHSGTPGPSSGG) are compositionally biased toward low complexity. The segment covering 231–242 (LASQSGDNSSEQ) has biased composition (polar residues). The homeobox DNA-binding region spans 267 to 329 (RNKKRGIFPK…NARRRIVQPM (63 aa)).

It belongs to the TALE/MEIS homeobox family.

The protein resides in the nucleus. Its function is as follows. A caudalizing protein which is required to pattern the anterior/posterior (A/P) axis during central nervous system (CNS) formation. Inhibits anterior neural expression and acts as a transcriptional activator to induce posterior neural gene expression. Maintains a proper A/P balance required for hindbrain formation by activating the FGF/MAPK pathway, which modulates the planar cell polarity (PCP) pathway. Interacts with retinoid signaling during hindbrain patterning. The sequence is that of Homeobox protein meis3 from Xenopus tropicalis (Western clawed frog).